A 433-amino-acid chain; its full sequence is Xylose isomerase (433 aa).

Active-site residues include histidine 97 and aspartate 100. The Mg(2+) site is built by glutamate 228, glutamate 264, histidine 267, aspartate 292, aspartate 303, aspartate 305, and aspartate 334.

Belongs to the xylose isomerase family. Homotetramer. Mg(2+) serves as cofactor.

The protein localises to the cytoplasm. It catalyses the reaction alpha-D-xylose = alpha-D-xylulofuranose. This is Xylose isomerase from Fervidobacterium gondwanense.